The primary structure comprises 425 residues: Dihydroorotase (425 aa).

Residues His58 and His60 each coordinate Zn(2+). Residues 60–62 and Asn92 contribute to the substrate site; that span reads HFR. Asp150, His177, and His230 together coordinate Zn(2+). Asn276 is a substrate binding site. Asp303 provides a ligand contact to Zn(2+). Residue Asp303 is part of the active site. Substrate-binding positions include His307 and 321–322; that span reads FG.

The protein belongs to the metallo-dependent hydrolases superfamily. DHOase family. Class I DHOase subfamily. Zn(2+) is required as a cofactor.

It carries out the reaction (S)-dihydroorotate + H2O = N-carbamoyl-L-aspartate + H(+). Its pathway is pyrimidine metabolism; UMP biosynthesis via de novo pathway; (S)-dihydroorotate from bicarbonate: step 3/3. Functionally, catalyzes the reversible cyclization of carbamoyl aspartate to dihydroorotate. The chain is Dihydroorotase from Pediococcus pentosaceus (strain ATCC 25745 / CCUG 21536 / LMG 10740 / 183-1w).